We begin with the raw amino-acid sequence, 900 residues long: Translation initiation factor IF-2 (900 aa).

The disordered stretch occupies residues 48 to 310; that stretch reads HLNRDRGNAP…KPSSLQQSFN (263 aa). A compositionally biased stretch (polar residues) spans 68–82; sequence STLNVPSTGGKSKSV. 2 stretches are compositionally biased toward basic and acidic residues: residues 85–98 and 108–164; these read EVRK…RDPI and QARR…KEKV. A compositionally biased stretch (polar residues) spans 165–176; sequence TNQQNENMTKPA. Basic and acidic residues predominate over residues 177–237; the sequence is QSEKAKREAE…SATKPEESAD (61 aa). The segment covering 263–277 has biased composition (basic residues); the sequence is TRTRAAKVTKQKKGN. The span at 278-291 shows a compositional bias: basic and acidic residues; that stretch reads RQSESKADREEARA. The tr-type G domain occupies 399-568; that stretch reads FRAPVVTIMG…LLQAEVLELK (170 aa). The interval 408-415 is G1; it reads GHVDHGKT. A GTP-binding site is contributed by 408-415; that stretch reads GHVDHGKT. The tract at residues 433 to 437 is G2; it reads GITQH. Positions 454-457 are G3; the sequence is DTPG. Residues 454 to 458 and 508 to 511 each bind GTP; these read DTPGH and NKID. Residues 508–511 form a G4 region; it reads NKID. Residues 544–546 are G5; sequence SAK.

Belongs to the TRAFAC class translation factor GTPase superfamily. Classic translation factor GTPase family. IF-2 subfamily.

It is found in the cytoplasm. One of the essential components for the initiation of protein synthesis. Protects formylmethionyl-tRNA from spontaneous hydrolysis and promotes its binding to the 30S ribosomal subunits. Also involved in the hydrolysis of GTP during the formation of the 70S ribosomal complex. This is Translation initiation factor IF-2 from Pectobacterium atrosepticum (strain SCRI 1043 / ATCC BAA-672) (Erwinia carotovora subsp. atroseptica).